Consider the following 201-residue polypeptide: Large ribosomal subunit protein uL4 (201 aa).

Residues 45–66 are disordered; it reads AQKSRAEVVGSNKKPWRQKGTG.

Belongs to the universal ribosomal protein uL4 family. Part of the 50S ribosomal subunit.

Functionally, one of the primary rRNA binding proteins, this protein initially binds near the 5'-end of the 23S rRNA. It is important during the early stages of 50S assembly. It makes multiple contacts with different domains of the 23S rRNA in the assembled 50S subunit and ribosome. Forms part of the polypeptide exit tunnel. The chain is Large ribosomal subunit protein uL4 from Baumannia cicadellinicola subsp. Homalodisca coagulata.